A 256-amino-acid chain; its full sequence is Pimeloyl-[acyl-carrier protein] methyl ester esterase (256 aa).

In terms of domain architecture, AB hydrolase-1 spans 15-242 (HLVLLHGWGL…AAHAPFISHP (228 aa)). Substrate-binding positions include tryptophan 22, 82-83 (SL), and 143-147 (FLALQ). Residue serine 82 is the Nucleophile of the active site. Residues aspartate 207 and histidine 235 contribute to the active site. Residue histidine 235 coordinates substrate.

It belongs to the AB hydrolase superfamily. Carboxylesterase BioH family. As to quaternary structure, monomer.

The protein resides in the cytoplasm. It carries out the reaction 6-carboxyhexanoyl-[ACP] methyl ester + H2O = 6-carboxyhexanoyl-[ACP] + methanol + H(+). It participates in cofactor biosynthesis; biotin biosynthesis. In terms of biological role, the physiological role of BioH is to remove the methyl group introduced by BioC when the pimeloyl moiety is complete. It allows to synthesize pimeloyl-ACP via the fatty acid synthetic pathway through the hydrolysis of the ester bonds of pimeloyl-ACP esters. This Escherichia coli O6:H1 (strain CFT073 / ATCC 700928 / UPEC) protein is Pimeloyl-[acyl-carrier protein] methyl ester esterase.